The sequence spans 220 residues: Ribosomal RNA large subunit methyltransferase E (220 aa).

Residues Gly60, Trp62, Asp92, Asp108, and Asp133 each coordinate S-adenosyl-L-methionine. Residue Lys173 is the Proton acceptor of the active site. Residues 197–220 are disordered; that stretch reads RKPKASRDKSSETFILGRQLKQPR.

Belongs to the class I-like SAM-binding methyltransferase superfamily. RNA methyltransferase RlmE family.

It is found in the cytoplasm. It catalyses the reaction uridine(2552) in 23S rRNA + S-adenosyl-L-methionine = 2'-O-methyluridine(2552) in 23S rRNA + S-adenosyl-L-homocysteine + H(+). Specifically methylates the uridine in position 2552 of 23S rRNA at the 2'-O position of the ribose in the fully assembled 50S ribosomal subunit. In Burkholderia ambifaria (strain ATCC BAA-244 / DSM 16087 / CCUG 44356 / LMG 19182 / AMMD) (Burkholderia cepacia (strain AMMD)), this protein is Ribosomal RNA large subunit methyltransferase E.